The primary structure comprises 167 residues: 16S rRNA aminocarboxypropyltransferase (167 aa).

5 residues coordinate S-adenosyl-L-methionine: Thr17, Val62, Leu84, Tyr99, and Ser103.

Belongs to the TDD superfamily. TSR3 family.

It is found in the cytoplasm. It catalyses the reaction an N(1)-methylpseudouridine in rRNA + S-adenosyl-L-methionine = N(1)-methyl-N(3)-[(3S)-3-amino-3-carboxypropyl]pseudouridine in rRNA + S-methyl-5'-thioadenosine + H(+). In terms of biological role, aminocarboxypropyltransferase that catalyzes the aminocarboxypropyl transfer on pseudouridine corresponding to position 914 in M.jannaschii 16S rRNA. It constitutes the last step in biosynthesis of the hypermodified N1-methyl-N3-(3-amino-3-carboxypropyl) pseudouridine (m1acp3-Psi). The polypeptide is 16S rRNA aminocarboxypropyltransferase (Sulfurisphaera tokodaii (strain DSM 16993 / JCM 10545 / NBRC 100140 / 7) (Sulfolobus tokodaii)).